Reading from the N-terminus, the 459-residue chain is MSSGRIVQIIGAVIDVEFPRDSVPSIYNALEVKSAAGTTLEVQQQLGDGVVRTIAMGSTEGLKRGLEVTDSGAAISVPVGKATLGRIMDVLGNPIDEAGPIATEERWGIHRPAPSFAEQAGGNDLLETGIKVIDLVCPFAKGGKVGLFGGAGVGKTVNMMELIRNIAIEHSGYSVFAGVGERTREGNDFYHEMKDSNVLDKVALVYGQMNEPPGNRLRVALTGLTMAEKFRDEGNDVLLFVDNIYRYTLAGTEVSALLGRMPSAVGYQPTLAEEMGTLQERITSTKNGSITSIQAVYVPADDLTDPSPATTFAHLDATVVLSRDIASLGIYPAVDPLDSTSRQLDPNVIGQEHYDTARGVQYVLQRYKELKDIIAILGMDELSETDKQLVNRARKIQRFLSQPFFVAEVFTGASGKYVSLKDTIAGFKGILNGDYDHLPEQAFYMVGGIEEAIEKAKKL.

Residue 149–156 participates in ATP binding; it reads GGAGVGKT.

It belongs to the ATPase alpha/beta chains family. As to quaternary structure, F-type ATPases have 2 components, CF(1) - the catalytic core - and CF(0) - the membrane proton channel. CF(1) has five subunits: alpha(3), beta(3), gamma(1), delta(1), epsilon(1). CF(0) has three main subunits: a(1), b(2) and c(9-12). The alpha and beta chains form an alternating ring which encloses part of the gamma chain. CF(1) is attached to CF(0) by a central stalk formed by the gamma and epsilon chains, while a peripheral stalk is formed by the delta and b chains.

The protein resides in the cell inner membrane. It catalyses the reaction ATP + H2O + 4 H(+)(in) = ADP + phosphate + 5 H(+)(out). Produces ATP from ADP in the presence of a proton gradient across the membrane. The catalytic sites are hosted primarily by the beta subunits. This is ATP synthase subunit beta from Pseudomonas syringae pv. tomato (strain ATCC BAA-871 / DC3000).